Here is a 60-residue protein sequence, read N- to C-terminus: Pepsin A (60 aa).

The propeptide at 1–45 (FIIKVPLVKKKSLRKNLKEHGLLKDFLKKHSPNPASKYFPQEAAV) is activation peptide.

It belongs to the peptidase A1 family.

The protein localises to the secreted. It carries out the reaction Preferential cleavage: hydrophobic, preferably aromatic, residues in P1 and P1' positions. Cleaves 1-Phe-|-Val-2, 4-Gln-|-His-5, 13-Glu-|-Ala-14, 14-Ala-|-Leu-15, 15-Leu-|-Tyr-16, 16-Tyr-|-Leu-17, 23-Gly-|-Phe-24, 24-Phe-|-Phe-25 and 25-Phe-|-Tyr-26 bonds in the B chain of insulin.. Its function is as follows. Shows particularly broad specificity; although bonds involving phenylalanine and leucine are preferred, many others are also cleaved to some extent. The chain is Pepsin A (PGA) from Ursus thibetanus (Asiatic black bear).